The sequence spans 236 residues: 7-cyano-7-deazaguanine synthase (236 aa).

21–31 (LSGGLDSATVL) contacts ATP. Residues cysteine 202, cysteine 212, cysteine 215, and cysteine 218 each coordinate Zn(2+).

The protein belongs to the QueC family. Requires Zn(2+) as cofactor.

It catalyses the reaction 7-carboxy-7-deazaguanine + NH4(+) + ATP = 7-cyano-7-deazaguanine + ADP + phosphate + H2O + H(+). It functions in the pathway purine metabolism; 7-cyano-7-deazaguanine biosynthesis. Its function is as follows. Catalyzes the ATP-dependent conversion of 7-carboxy-7-deazaguanine (CDG) to 7-cyano-7-deazaguanine (preQ(0)). This is 7-cyano-7-deazaguanine synthase from Frankia casuarinae (strain DSM 45818 / CECT 9043 / HFP020203 / CcI3).